The sequence spans 452 residues: Phosphoglucosamine mutase (452 aa).

The active-site Phosphoserine intermediate is S104. Residues S104, D241, D243, and D245 each coordinate Mg(2+). Residue S104 is modified to Phosphoserine.

This sequence belongs to the phosphohexose mutase family. It depends on Mg(2+) as a cofactor. Post-translationally, activated by phosphorylation.

It catalyses the reaction alpha-D-glucosamine 1-phosphate = D-glucosamine 6-phosphate. Catalyzes the conversion of glucosamine-6-phosphate to glucosamine-1-phosphate. This Arthrobacter sp. (strain FB24) protein is Phosphoglucosamine mutase.